A 662-amino-acid chain; its full sequence is Zinc finger protein 800 (662 aa).

The C2H2-type 1; degenerate zinc finger occupies F69–Y91. A Glycyl lysine isopeptide (Lys-Gly) (interchain with G-Cter in SUMO2) cross-link involves residue K132. 2 disordered regions span residues E172–I197 and A205–S224. Low complexity predominate over residues A205–Q216. The C2H2-type 2 zinc-finger motif lies at L231–H254. K280 is covalently cross-linked (Glycyl lysine isopeptide (Lys-Gly) (interchain with G-Cter in SUMO2)). The C2H2-type 3 zinc finger occupies R288–H311. Position 318 is a phosphoserine (S318). A disordered region spans residues I319–S349. Position 320 is a phosphothreonine (T320). S337 carries the post-translational modification Phosphoserine. A compositionally biased stretch (basic residues) spans K340–S349. The segment at T357–H382 adopts a C2H2-type 4 zinc-finger fold. The disordered stretch occupies residues A389–P473. K392 participates in a covalent cross-link: Glycyl lysine isopeptide (Lys-Gly) (interchain with G-Cter in SUMO2). The span at V414–H434 shows a compositional bias: polar residues. Residues S420, S424, S453, S455, S458, and S460 each carry the phosphoserine modification. A compositionally biased stretch (low complexity) spans P456–Q468. K474 is covalently cross-linked (Glycyl lysine isopeptide (Lys-Gly) (interchain with G-Cter in SUMO2)). 2 consecutive C2H2-type zinc fingers follow at residues L484–H506 and Y517–H540. 2 disordered regions span residues R573–K597 and H633–V662. Basic and acidic residues predominate over residues P575 to Q587. A Glycyl lysine isopeptide (Lys-Gly) (interchain with G-Cter in SUMO2) cross-link involves residue K597. Residues H616 to H638 form a C2H2-type 7 zinc finger. The span at T651–V662 shows a compositional bias: basic residues.

This sequence belongs to the krueppel C2H2-type zinc-finger protein family.

It is found in the nucleus. In terms of biological role, may be involved in transcriptional regulation. This Mus musculus (Mouse) protein is Zinc finger protein 800 (Znf800).